Here is a 447-residue protein sequence, read N- to C-terminus: Phosphoglucosamine mutase (447 aa).

Serine 88 acts as the Phosphoserine intermediate in catalysis. Serine 88, aspartate 231, aspartate 233, and aspartate 235 together coordinate Mg(2+). Serine 88 carries the phosphoserine modification.

Belongs to the phosphohexose mutase family. As to quaternary structure, monomer. Also forms large aggregates. It depends on Mg(2+) as a cofactor. In terms of processing, activated by phosphorylation. Glucose-1,6-bisphosphate or fructose-1,6-bisphosphate can activate the enzyme in vitro. However, since glucose-1,6-bisphosphate is not believed to form in methanogens, the physiologically relevant activator might be a serine kinase protein.

It carries out the reaction alpha-D-glucosamine 1-phosphate = D-glucosamine 6-phosphate. In terms of biological role, catalyzes the conversion of glucosamine-6-phosphate to glucosamine-1-phosphate. Also catalyzes the isomerization of glucose-1-phosphate to glucose-6-phosphate, but at a 5-fold lower rate. In Methanococcus maripaludis (strain DSM 14266 / JCM 13030 / NBRC 101832 / S2 / LL), this protein is Phosphoglucosamine mutase (glmM).